We begin with the raw amino-acid sequence, 213 residues long: Probable GTP-binding protein EngB (213 aa).

One can recognise an EngB-type G domain in the interval 30–204 (EGFEVAFAGR…YTVLAGWMEL (175 aa)). GTP contacts are provided by residues 38-45 (GRSNAGKS), 64-68 (GRTQL), 82-85 (DLPG), 149-152 (TKAD), and 182-185 (LFSA). The Mg(2+) site is built by S45 and T66.

It belongs to the TRAFAC class TrmE-Era-EngA-EngB-Septin-like GTPase superfamily. EngB GTPase family. Requires Mg(2+) as cofactor.

Necessary for normal cell division and for the maintenance of normal septation. The protein is Probable GTP-binding protein EngB of Pseudomonas fluorescens (strain ATCC BAA-477 / NRRL B-23932 / Pf-5).